A 212-amino-acid chain; its full sequence is MNLLIMGLPGAGKGTQAAKIVEEFGIAHISTGDMFRAAMANQTEMGRLAKSYIDKGELVPDEVTNGIVKERLAEDDIAEKGFLLDGYPRTIEQAHALDATLEELGLRLDGVINIKVDPSCLVERLSGRIINRKTGETFHKVFNPPVDYKEEDYYQREDDKPETVKRRLDVNMAQGEPILEHYRKLGLVTDIEGNQEITDVFADVEKALLELK.

10 to 15 (GAGKGT) contacts ATP. An NMP region spans residues 30-59 (STGDMFRAAMANQTEMGRLAKSYIDKGELV). Residues Thr31, Arg36, 57 to 59 (ELV), 86 to 89 (GYPR), and Gln93 each bind AMP. The LID stretch occupies residues 127-159 (GRIINRKTGETFHKVFNPPVDYKEEDYYQREDD). ATP-binding positions include Arg128 and 137–138 (TF). Residues Arg156 and Arg167 each contribute to the AMP site. Gln195 provides a ligand contact to ATP.

Belongs to the adenylate kinase family. As to quaternary structure, monomer.

It localises to the cytoplasm. It catalyses the reaction AMP + ATP = 2 ADP. It participates in purine metabolism; AMP biosynthesis via salvage pathway; AMP from ADP: step 1/1. In terms of biological role, catalyzes the reversible transfer of the terminal phosphate group between ATP and AMP. Plays an important role in cellular energy homeostasis and in adenine nucleotide metabolism. This is Adenylate kinase from Streptococcus pyogenes serotype M1.